Here is a 77-residue protein sequence, read N- to C-terminus: MGSFSIWHWLVVGILVLLLFGKGRFSDMMGDVAKGIKSFKKGMSEDDAPTPAPKQIDAQRAPDLSATPTPTAETENR.

A helical membrane pass occupies residues 1-21 (MGSFSIWHWLVVGILVLLLFG). Residues 41–77 (KGMSEDDAPTPAPKQIDAQRAPDLSATPTPTAETENR) are disordered. The segment covering 66 to 77 (ATPTPTAETENR) has biased composition (polar residues).

Belongs to the TatA/E family. In terms of assembly, the Tat system comprises two distinct complexes: a TatABC complex, containing multiple copies of TatA, TatB and TatC subunits, and a separate TatA complex, containing only TatA subunits. Substrates initially bind to the TatABC complex, which probably triggers association of the separate TatA complex to form the active translocon.

Its subcellular location is the cell inner membrane. Part of the twin-arginine translocation (Tat) system that transports large folded proteins containing a characteristic twin-arginine motif in their signal peptide across membranes. TatA could form the protein-conducting channel of the Tat system. The protein is Sec-independent protein translocase protein TatA of Sphingopyxis alaskensis (strain DSM 13593 / LMG 18877 / RB2256) (Sphingomonas alaskensis).